A 510-amino-acid chain; its full sequence is NADH-quinone oxidoreductase subunit N (510 aa).

A run of 14 helical transmembrane segments spans residues 14–34, 42–62, 84–104, 113–133, 135–155, 170–190, 208–228, 247–267, 286–306, 323–343, 346–366, 390–410, 426–446, and 466–486; these read LLPE…DLFA, VIGW…IINM, AFKL…LSYL, GEYY…ASSA, LITL…LVGL, VVSG…VYGL, MAGY…GLAF, PTPV…ALIF, FFFE…MIIG, SGIA…SLFF, VIFY…VIMV, AIAM…VGFF, WLAA…FGII, and IWTF…FPGL.

Belongs to the complex I subunit 2 family. As to quaternary structure, NDH-1 is composed of 14 different subunits. Subunits NuoA, H, J, K, L, M, N constitute the membrane sector of the complex.

The protein localises to the cell membrane. The enzyme catalyses a quinone + NADH + 5 H(+)(in) = a quinol + NAD(+) + 4 H(+)(out). Functionally, NDH-1 shuttles electrons from NADH, via FMN and iron-sulfur (Fe-S) centers, to quinones in the respiratory chain. The immediate electron acceptor for the enzyme in this species is believed to be a menaquinone. Couples the redox reaction to proton translocation (for every two electrons transferred, four hydrogen ions are translocated across the cytoplasmic membrane), and thus conserves the redox energy in a proton gradient. In Brevibacillus brevis (strain 47 / JCM 6285 / NBRC 100599), this protein is NADH-quinone oxidoreductase subunit N.